Reading from the N-terminus, the 456-residue chain is Probable mannan endo-1,4-beta-mannosidase F (456 aa).

A signal peptide spans 1–18 (MRPLSSAALLSAIGAVAA). The CBM1 domain maps to 19-54 (QVGPWGQCGGQSYTGGTSCVSGWACVFLNDWYSQCQ). A disordered region spans residues 79–110 (STSVSATAPPSSTSSSTASVSSSTSSTPIPTS). A ser-rich linker region spans residues 79-113 (STSVSATAPPSSTSSSTASVSSSTSSTPIPTSSGS). Residues 114–456 (FVKAEGLKFN…CAVIDHVSRI (343 aa)) are catalytic. Positions 166 and 280 each coordinate substrate. Glutamate 281 (proton donor) is an active-site residue. Tyrosine 356 provides a ligand contact to substrate. The active-site Nucleophile is glutamate 390. Residue tryptophan 420 coordinates substrate.

This sequence belongs to the glycosyl hydrolase 5 (cellulase A) family.

The protein localises to the secreted. The catalysed reaction is Random hydrolysis of (1-&gt;4)-beta-D-mannosidic linkages in mannans, galactomannans and glucomannans.. In terms of biological role, endo-1,4-mannanase, a crucial enzyme for depolymerization of seed galactomannans and wood galactoglucomannans. The sequence is that of Probable mannan endo-1,4-beta-mannosidase F (manF) from Neosartorya fischeri (strain ATCC 1020 / DSM 3700 / CBS 544.65 / FGSC A1164 / JCM 1740 / NRRL 181 / WB 181) (Aspergillus fischerianus).